The chain runs to 252 residues: Phosphate import ATP-binding protein PstB (252 aa).

In terms of domain architecture, ABC transporter spans 6-247 (IEVKNLNTYF…PKNKQTENYI (242 aa)). 38 to 45 (GPSGCGKS) is an ATP binding site.

It belongs to the ABC transporter superfamily. Phosphate importer (TC 3.A.1.7) family. As to quaternary structure, the complex is composed of two ATP-binding proteins (PstB), two transmembrane proteins (PstC and PstA) and a solute-binding protein (PstS).

Its subcellular location is the cell membrane. It catalyses the reaction phosphate(out) + ATP + H2O = ADP + 2 phosphate(in) + H(+). Its function is as follows. Part of the ABC transporter complex PstSACB involved in phosphate import. Responsible for energy coupling to the transport system. This Methanosphaera stadtmanae (strain ATCC 43021 / DSM 3091 / JCM 11832 / MCB-3) protein is Phosphate import ATP-binding protein PstB.